A 646-amino-acid chain; its full sequence is MAEPALLDPTAAFDLRLYPAHLFDHELPLAGGGGGDDDDDLPLDGLEFDLPGDFSVEDFLLRSPERDDSGEGSAAGSGPTASPSSSPTTSASNSAVANGSGGEVKHEESDEGRSGGGDPKWSLKRKQASPGPSSDAAKCRRSGDGDVSPSASASRTAVDSDEGGTVCEEEEDERRAARLMRNRESAQLSRQRKKRYVEELEEKVKSMHSVINDLNSRISFVVAENATLRQQLSGGSVNCPPPGVYPPAPIPGMHFPWMPGYAMRPPGSHVPLVPIPRLKPQQPVPSSKVVKKPESKKTVENKSKSKTKTKKVASVSLLGLLLIMLVFGAFIPGFNHNFGMCGQSDNAMFRNFGQSHARVLSVSSQDKSSLNNSDMIGVDVGKMTGNTDGPGKKHQPAHNSSEILPALLYVPRNGKHVKINGNLIIHSVLASEKAVAHKASKDDSDQSARDHKETSVAIARYLSLPGKDVNRQETSSADGPLPQWFREGMEGPILNSGMCSEVFQFDISTASSNPGGIIPASPVVNSSSVNATEKIPAHSAAYHGKLKNRRVMYNEAIPLTGKTANNTEPFNRTSESSSKLPDSKPASSVVVSVLADPREAGNGDGDPRVSPKPLSKIFVVVLVDGVRYVTYSCTLPFKSSSPHLVN.

Topologically, residues M1 to K311 are cytoplasmic. Residues H25–D172 form a disordered region. A compositionally biased stretch (low complexity) spans L43–D53. Basic and acidic residues predominate over residues F59–S69. Residues E71–N98 are compositionally biased toward low complexity. Positions E103–R113 are enriched in basic and acidic residues. Positions D159–D172 are enriched in acidic residues. One can recognise a bZIP domain in the interval D172 to L232. Residues R174–K205 are basic motif. A leucine-zipper region spans residues I211–I218. The interval L272–K308 is disordered. Low complexity predominate over residues K279 to K288. The span at K291–S303 shows a compositional bias: basic and acidic residues. The chain crosses the membrane as a helical span at residues V312–P332. The Lumenal segment spans residues G333–N646. Residues N371, N399, N525, N530, N565, and N571 are each glycosylated (N-linked (GlcNAc...) asparagine). The tract at residues T560–P585 is disordered. The segment covering K562–P585 has biased composition (polar residues).

It belongs to the bZIP family. As to expression, highly expressed in leaf blade, and at lower levels in roots, leaf sheaths, flowers and seeds.

It localises to the endoplasmic reticulum membrane. The protein localises to the nucleus. Functionally, transcription factor involved in endoplasmic reticulum (ER) stress response. Acts as a ER stress sensor and activates the transcription factor BZIP50 and the chaperone BIP1. This is bZIP transcription factor 39 from Oryza sativa subsp. japonica (Rice).